The chain runs to 841 residues: pre-rRNA 2'-O-ribose RNA methyltransferase FTSJ3 (841 aa).

S-adenosyl-L-methionine-binding residues include glycine 56, tryptophan 58, aspartate 76, aspartate 92, and aspartate 117. The active-site Proton acceptor is the lysine 157. The tract at residues 332-366 (ISLSSGEEDEGNEEDSTAGTTEQPSKEEEEEEQLN) is disordered. 5 positions are modified to phosphoserine: serine 333, serine 335, serine 336, serine 347, and serine 356. Residues 337–347 (GEEDEGNEEDS) show a composition bias toward acidic residues. Positions 356 to 404 (SKEEEEEEQLNQTLAEMKAQEVAELKRKKKKLLREQRKQRERVELKMDL) form a coiled coil. Lysine 357 participates in a covalent cross-link: Glycyl lysine isopeptide (Lys-Gly) (interchain with G-Cter in SUMO2). Citrulline is present on arginine 389. The tract at residues 454–482 (VSDVEDDGDDTSLDSDLDPEELAGVRGHQ) is disordered. Acidic residues predominate over residues 456-474 (DVEDDGDDTSLDSDLDPEE). Serine 547 carries the post-translational modification Phosphoserine. Threonine 567 bears the Phosphothreonine mark. Lysine 573 participates in a covalent cross-link: Glycyl lysine isopeptide (Lys-Gly) (interchain with G-Cter in SUMO2). Phosphoserine is present on serine 578. Residues 579 to 654 (PLYQDEAPKG…IVPIEDPAKH (76 aa)) form a disordered region. Lysine 637 is covalently cross-linked (Glycyl lysine isopeptide (Lys-Gly) (interchain with G-Cter in SUMO2)). At serine 638 the chain carries Phosphoserine. Lysine 653 is covalently cross-linked (Glycyl lysine isopeptide (Lys-Gly) (interchain with G-Cter in SUMO2)). Serine 670 carries the phosphoserine modification. Lysine 672 participates in a covalent cross-link: Glycyl lysine isopeptide (Lys-Gly) (interchain with G-Cter in SUMO2). Residue serine 682 is modified to Phosphoserine. Residue lysine 704 forms a Glycyl lysine isopeptide (Lys-Gly) (interchain with G-Cter in SUMO2) linkage. Positions 733 to 771 (IKKVAEAKARKKRRMLKRLEQTRKKAEAVVNTVDISERE) form a coiled coil. The residue at position 777 (arginine 777) is a Citrulline. Positions 805–815 (VRRPAGVRGHF) are enriched in basic residues. The segment at 805–841 (VRRPAGVRGHFKVVDSRMKKDQRAQQRKEQKKKHKRK) is disordered. Residues 816–832 (KVVDSRMKKDQRAQQRK) show a composition bias toward basic and acidic residues.

This sequence belongs to the class I-like SAM-binding methyltransferase superfamily. RNA methyltransferase RlmE family. SPB1 subfamily. As to quaternary structure, interacts with NIP7. In terms of processing, citrullinated by PADI4.

Its subcellular location is the nucleus. It is found in the nucleolus. It catalyses the reaction a ribonucleotide in rRNA + S-adenosyl-L-methionine = a 2'-O-methylribonucleotide in rRNA + S-adenosyl-L-homocysteine + H(+). Functionally, RNA 2'-O-methyltransferase involved in the processing of the 34S pre-rRNA to 18S rRNA and in 40S ribosomal subunit formation. In Pongo abelii (Sumatran orangutan), this protein is pre-rRNA 2'-O-ribose RNA methyltransferase FTSJ3.